A 739-amino-acid polypeptide reads, in one-letter code: MRLLPLLVGFSTLLNCSYTQNCSKTTCLPNAKCEVHNGVEACFCSQGYSGNGVTICEDIDECSESSVCGDHAVCENVNGGFSCFCREGYQTATGKSQFTPNDGSYCQDIDECSESSVCGDHAVCENVNGGFSCFCREGYQTATGKSQFTPNDGSYCQESMNSNCHLEHACIAANINKTLKRIGPITEQTTLLQEIYRNSEAELSLMDIVTYIEILTESSSLLGHPNSTTSYKDAHFNSTLTEFGETINNFVERSTHKMWDQLPTNHRRLHLTKLMHTAELVTLQIAQNTQKNSQFDMNSTDLALKVFAFDSTHMKHAHPHMNVDGGYVKISPRRKAAHGTTGNVVVAFLCYKSIGPLLSSSDNFLLDTQNDNSEGKEKVISSVISASISSNPPTLYELEKITFTLSHVKLSDKHRTQCAFWNYSVDAMNNGSWSTEGCELTHSNDTHTSCRCSHLTHFAILMSSTSSIGIKDYNILTRITQLGIIISLICLAICIFTFWFFSEIQSTRTTIHKNLCCSLFLAELVFLIGININTNKLVCSIIAGLLHYFFLAAFAWMCIEGIHLYLIVVGVIYNKGFLHKNFYIFGYLSPAVVVGFSASLGYRYYGTTKVCWLSTENNFIWSFIGPACLIILVNLLAFGVIIYKVFRHTAGLKPEVSCYENIRSCARGALALLFLLGTTWIFGVLHVVHASVVTAYLFTVSNAFQGMFIFLFLCVLSRKIQEEYYRLFKNVPCCFGCLR.

The signal sequence occupies residues Met-1–Thr-19. Residues Gln-20–Glu-57 enclose the EGF-like 1 domain. The Extracellular portion of the chain corresponds to Gln-20–Gln-481. N-linked (GlcNAc...) asparagine glycosylation occurs at Asn-21. Cystine bridges form between Cys-22–Cys-33, Cys-27–Cys-42, Cys-44–Cys-56, Cys-62–Cys-74, Cys-68–Cys-83, Cys-85–Cys-106, Cys-112–Cys-124, Cys-118–Cys-133, and Cys-135–Cys-156. Residues Asp-58 to Gln-107 enclose the EGF-like 2; calcium-binding domain. An EGF-like 3; calcium-binding domain is found at Asp-108–Gln-157. N-linked (GlcNAc...) asparagine glycans are attached at residues Asn-176, Asn-226, Asn-237, Asn-298, Asn-422, Asn-430, and Asn-444. Positions Ser-293–Ile-468 constitute a GAIN-B domain. Cystine bridges form between Cys-418/Cys-450 and Cys-438/Cys-452. The tract at residues Cys-418 to Ile-468 is GPS. A helical membrane pass occupies residues Leu-482 to Ser-502. Topologically, residues Glu-503–Lys-513 are cytoplasmic. A helical membrane pass occupies residues Asn-514–Thr-534. Residues Asn-535–Tyr-548 lie on the Extracellular side of the membrane. The chain crosses the membrane as a helical span at residues Phe-549 to Val-569. The Cytoplasmic portion of the chain corresponds to Gly-570–Asn-581. The helical transmembrane segment at Phe-582–Tyr-602 threads the bilayer. Topologically, residues Arg-603–Ser-622 are extracellular. A helical transmembrane segment spans residues Phe-623–Tyr-643. Topologically, residues Lys-644–Arg-667 are cytoplasmic. A helical transmembrane segment spans residues Gly-668–Val-688. At His-689–Ala-695 the chain is on the extracellular side. A helical transmembrane segment spans residues Tyr-696 to Leu-716. The Cytoplasmic segment spans residues Ser-717–Arg-739.

It belongs to the G-protein coupled receptor 2 family. Adhesion G-protein coupled receptor (ADGR) subfamily. In terms of assembly, heterodimer of 2 chains generated by proteolytic processing; the large extracellular N-terminal fragment and the membrane-bound C-terminal fragment predominantly remain associated and non-covalently linked. Glycosylated. In terms of processing, proteolytically cleaved into 2 subunits, an extracellular alpha subunit and a seven-transmembrane subunit.

The protein resides in the cell membrane. Its function is as follows. Endothelial orphan receptor that acts as a key regulator of angiogenesis. This is Adhesion G protein-coupled receptor L4 (Adgrl4) from Mus musculus (Mouse).